The following is a 139-amino-acid chain: Trafficking protein particle complex subunit 2-like protein (139 aa).

The protein belongs to the TRAPP small subunits family. Sedlin subfamily. In terms of assembly, component of the multisubunit TRAPP (transport protein particle) complex, which includes at least TRAPPC2, TRAPPC2L, TRAPPC3, TRAPPC3L, TRAPPC4, TRAPPC5, TRAPPC8, TRAPPC9, TRAPPC10, TRAPPC11 and TRAPPC12. Interacts with the heterodimer TRAPPC3-TRAPPC6A.

The protein resides in the cytoplasm. The protein localises to the perinuclear region. Its subcellular location is the endoplasmic reticulum. It localises to the golgi apparatus. Its function is as follows. May play a role in vesicular transport from endoplasmic reticulum to Golgi. The chain is Trafficking protein particle complex subunit 2-like protein (Trappc2l) from Mus musculus (Mouse).